Consider the following 78-residue polypeptide: UPF0349 protein SSP1836 (78 aa).

This sequence belongs to the UPF0349 family.

This chain is UPF0349 protein SSP1836, found in Staphylococcus saprophyticus subsp. saprophyticus (strain ATCC 15305 / DSM 20229 / NCIMB 8711 / NCTC 7292 / S-41).